The following is a 627-amino-acid chain: Probable inactive receptor kinase At3g02880 (627 aa).

The first 23 residues, 1–23, serve as a signal peptide directing secretion; the sequence is MKYKRKLSLSVVFLFVFYLAAVT. LRR repeat units follow at residues 91-112, 115-137, 139-161, 163-184, and 185-206; these read QLKT…DFSN, LLRY…LFTL, SIIR…VNSA, RLVT…ITLP, and LQQF…LSSW. The segment at 222–246 is disordered; the sequence is DTCEAESPNGGDAGGPNTPPEKKDS. The helical transmembrane segment at 253 to 273 threads the bilayer; sequence AIVGIVIGCVVGLLLLLLILF. The region spanning 345 to 620 is the Protein kinase domain; it reads KASAEVLGKG…LIEEVSHSSG (276 aa). Phosphoserine is present on Ser347. ATP contacts are provided by residues 351-359 and Lys373; that span reads LGKGTVGSS. The chain crosses the membrane as a helical span at residues 389-409; it reads LHVLGSMSHANLVTLIAYYFS. A Phosphoserine modification is found at Ser424. The residue at position 444 (Thr444) is a Phosphothreonine. Position 519 is a phosphoserine (Ser519). A Phosphothreonine modification is found at Thr595. 2 positions are modified to phosphoserine: Ser621 and Ser626.

This sequence belongs to the protein kinase superfamily. Ser/Thr protein kinase family.

It is found in the membrane. The chain is Probable inactive receptor kinase At3g02880 from Arabidopsis thaliana (Mouse-ear cress).